Reading from the N-terminus, the 176-residue chain is ADP-ribosylation factor-like protein 8d (176 aa).

GTP-binding positions include 21-26 (NSGKTS), 40-43 (MIPT), 62-66 (DLGGQ), and 121-124 (NKID).

Belongs to the small GTPase superfamily. Arf family. Interacts with tubulin.

Its subcellular location is the late endosome membrane. It localises to the lysosome membrane. It is found in the cytoplasm. The protein localises to the cytoskeleton. The protein resides in the spindle. May play a role in lysosome motility. May play a role in chromosome segregation. The chain is ADP-ribosylation factor-like protein 8d from Arabidopsis thaliana (Mouse-ear cress).